The following is a 188-amino-acid chain: Elongation factor P (188 aa).

At lysine 34 the chain carries N6-(3,6-diaminohexanoyl)-5-hydroxylysine.

The protein belongs to the elongation factor P family. In terms of processing, may be beta-lysylated on the epsilon-amino group of Lys-34 by the combined action of EpmA and EpmB, and then hydroxylated on the C5 position of the same residue by EpmC (if this protein is present). Lysylation is critical for the stimulatory effect of EF-P on peptide-bond formation. The lysylation moiety may extend toward the peptidyltransferase center and stabilize the terminal 3-CCA end of the tRNA. Hydroxylation of the C5 position on Lys-34 may allow additional potential stabilizing hydrogen-bond interactions with the P-tRNA.

The protein localises to the cytoplasm. It participates in protein biosynthesis; polypeptide chain elongation. Functionally, involved in peptide bond synthesis. Alleviates ribosome stalling that occurs when 3 or more consecutive Pro residues or the sequence PPG is present in a protein, possibly by augmenting the peptidyl transferase activity of the ribosome. Modification of Lys-34 is required for alleviation. The protein is Elongation factor P of Proteus mirabilis (strain HI4320).